The chain runs to 391 residues: Formate-dependent phosphoribosylglycinamide formyltransferase (391 aa).

Residues 18–19 (EL) and glutamate 78 contribute to the N(1)-(5-phospho-beta-D-ribosyl)glycinamide site. ATP is bound by residues arginine 110, lysine 151, 156 to 161 (SSGKGQ), 191 to 194 (EEFI), and glutamate 199. An ATP-grasp domain is found at 115-305 (DLASKDLKIK…EFELHLRAFL (191 aa)). Positions 264 and 276 each coordinate Mg(2+). Residues aspartate 283, lysine 353, and 360–361 (RR) contribute to the N(1)-(5-phospho-beta-D-ribosyl)glycinamide site.

It belongs to the PurK/PurT family. As to quaternary structure, homodimer.

The catalysed reaction is N(1)-(5-phospho-beta-D-ribosyl)glycinamide + formate + ATP = N(2)-formyl-N(1)-(5-phospho-beta-D-ribosyl)glycinamide + ADP + phosphate + H(+). Its pathway is purine metabolism; IMP biosynthesis via de novo pathway; N(2)-formyl-N(1)-(5-phospho-D-ribosyl)glycinamide from N(1)-(5-phospho-D-ribosyl)glycinamide (formate route): step 1/1. Its function is as follows. Involved in the de novo purine biosynthesis. Catalyzes the transfer of formate to 5-phospho-ribosyl-glycinamide (GAR), producing 5-phospho-ribosyl-N-formylglycinamide (FGAR). Formate is provided by PurU via hydrolysis of 10-formyl-tetrahydrofolate. The chain is Formate-dependent phosphoribosylglycinamide formyltransferase from Prochlorococcus marinus (strain MIT 9301).